The following is a 625-amino-acid chain: DELLA protein SLR1 (625 aa).

A disordered region spans residues 1–34 (MKREYQEAGGSSGGGSSADMGSCKDKVMAGAAGE). The short motif at 39-43 (DELLA) is the DELLA motif element. The disordered stretch occupies residues 167–209 (TADPSAADSARDTKRMRTGGGSTSSSSSSSSSLGGGASRGSVV). A compositionally biased stretch (low complexity) spans 189-198 (TSSSSSSSSS). The region spanning 232-621 (VDTQEAGIRL…RPLIATSAWR (390 aa)) is the GRAS domain. A leucine repeat I (LRI) region spans residues 239 to 294 (IRLVHALLACAEAVQQENFAAAEALVKQIPTLAASQGGAMRKVAAYFGEALARRVY). The segment at 241–278 (LVHALLACAEAVQQENFAAAEALVKQIPTLAASQGGAM) is required for possible homodimerization. A LxCxE motif motif is present at residues 246–250 (LACAE). Positions 313–378 (HAHFYESCPY…GGPPSFRLTG (66 aa)) are VHIID. Residues 344 to 348 (VHVVD) carry the VHIID motif. The interval 392–431 (QVGWKLAQFAHTIRVDFQYRGLVAATLADLEPFMLQPEGE) is leucine repeat II (LRII). A PFYRE region spans residues 441 to 542 (IAVNSVFELH…EVYLGRQICN (102 aa)). The LXXLL motif motif lies at 449 to 453 (LHRLL). The segment at 545–621 (ACEGAERTER…RPLIATSAWR (77 aa)) is SAW.

The protein belongs to the GRAS family. DELLA subfamily. As to quaternary structure, may be a homodimer. Interacts directly with the GID2 component of the SCF(GID2) complex. Interacts with GID1 in a GA-dependent manner, probably leading to its interaction with GID2 and its subsequent degradation. Interacts with D14 and GID1 in an strigolactone-dependent manner. Interacts with HD16/EL1. In terms of processing, phosphorylated on Ser/Thr residues in the N-terminal part. Both phosphorylated and unphosphorylated forms are degraded upon GA treatment, suggesting that phosphorylation does not trigger ubiquitination. Phosphorylated by HD16/EL1. Phosphorylation enhances its stability. Ubiquitinated. Upon GA application it is ubiquitinated by the SCF(GID2) complex, leading to its subsequent degradation. In terms of tissue distribution, expressed in nodes, internodes, leaf sheats of young seedlings and ears of adult plants. Weakly expressed in leaf blade and root.

Its subcellular location is the nucleus. Its function is as follows. Probable transcriptional regulator that acts as a repressor of the gibberellin (GA) signaling pathway. Probably acts by participating in large multiprotein complexes that repress transcription of GA-inducible genes. Upon GA application, it is degraded by the proteasome, allowing the GA signaling pathway. In contrast, its overexpression prevents the GA signaling pathway and induces a dwarf phenotype. The polypeptide is DELLA protein SLR1 (Oryza sativa subsp. japonica (Rice)).